Consider the following 392-residue polypeptide: DNA-directed RNA polymerase subunit Rpo1C (392 aa).

The protein belongs to the RNA polymerase beta' chain family. In terms of assembly, part of the 13-subunit RNA polymerase complex.

Its subcellular location is the cytoplasm. It catalyses the reaction RNA(n) + a ribonucleoside 5'-triphosphate = RNA(n+1) + diphosphate. In terms of biological role, DNA-dependent RNA polymerase (RNAP) catalyzes the transcription of DNA into RNA using the four ribonucleoside triphosphates as substrates. Forms part of the jaw domain. This chain is DNA-directed RNA polymerase subunit Rpo1C, found in Saccharolobus solfataricus (strain ATCC 35092 / DSM 1617 / JCM 11322 / P2) (Sulfolobus solfataricus).